The following is a 685-amino-acid chain: Phenoloxidase subunit 1 (685 aa).

A propeptide spanning residues 1 to 51 (MSDAKNNLLLFFDRPSEPCFMQKGEENAVFEIPDNYYPEKYQRVSNAIGNR) is cleaved from the precursor. Asn184 is a glycosylation site (N-linked (GlcNAc...) asparagine). Positions 209, 213, and 239 each coordinate Cu cation. N-linked (GlcNAc...) asparagine glycosylation is found at Asn254 and Asn324. The active-site Proton acceptor is the Glu351. Positions 366, 370, and 406 each coordinate Cu cation. 2 N-linked (GlcNAc...) asparagine glycosylation sites follow: Asn491 and Asn540. 2 cysteine pairs are disulfide-bonded: Cys581–Cys623 and Cys583–Cys630.

As to quaternary structure, heterodimer. Cu(2+) is required as a cofactor. The N-terminus is blocked. As to expression, synthesized by hemocytes and released into the hemolymph plasma.

The protein localises to the secreted. It catalyses the reaction 2 L-dopa + O2 = 2 L-dopaquinone + 2 H2O. The catalysed reaction is L-tyrosine + O2 = L-dopaquinone + H2O. This is a copper-containing oxidase that functions in the formation of pigments such as melanins and other polyphenolic compounds. Catalyzes the rate-limiting conversions of tyrosine to DOPA, DOPA to DOPA-quinone and possibly 5,6 dihydroxyindole to indole-5'6 quinone. This Bombyx mori (Silk moth) protein is Phenoloxidase subunit 1.